Reading from the N-terminus, the 539-residue chain is MYGGDEFSNNGDFYDDYAHTGDPQLDLEYERSYYTSRMPDNVKYFLMNFCQAIKDGNLYDIQNMYENTFPQISDHHFDKTAWPEEQEVASIVDNEKVFLILYKELYFRHIHARIPGGPKLDQRINSFFNYCDFFNLIISAQNPVMLELPDIWLWELVDEFVYQFQNFAQYRARLTDKSQDEIQQLCVNHSNVWSILCILNVLHSLVDISNIKKQLEVISQGVDPQTVAGDFGKLSFYKMLGYFSLVGLLRVHSLLGDYYQAIKVLEPIEIHKKSAYSHIPACQISTSYYVGFAYMMMRRYADAIRTFSDILLYVQRTKQLYSTRSYQNDQINKQAEQMYHLLAICLVLHPQCIDESIQQVLREKNYHDAMFKMQCGDLDVFKSFFIFACPRFVSPCPPAADAPMEDYVKDPMEHQLLVFMDEVRQQKDLPTTRSYLKLYTTLPLAKLASFIDPNASEDDVSKLLIRLLCFKHKMRNLVWSKGPSGLEGSFKSGSELDFYIDDDMIHIADTKVSHRYGDFFVRKILKFNDLNRKLKGVNI.

Residues 306–514 (TFSDILLYVQ…IHIADTKVSH (209 aa)) enclose the PCI domain.

The protein belongs to the eIF-3 subunit L family. Component of the eukaryotic translation initiation factor 3 (eIF-3) complex. The eIF-3 complex interacts with pix.

It localises to the cytoplasm. Component of the eukaryotic translation initiation factor 3 (eIF-3) complex, which is involved in protein synthesis of a specialized repertoire of mRNAs and, together with other initiation factors, stimulates binding of mRNA and methionyl-tRNAi to the 40S ribosome. The eIF-3 complex specifically targets and initiates translation of a subset of mRNAs involved in cell proliferation. The chain is Eukaryotic translation initiation factor 3 subunit L from Drosophila willistoni (Fruit fly).